Here is a 311-residue protein sequence, read N- to C-terminus: Cytosolic Fe-S cluster assembly factor Nubp1 homolog (311 aa).

[4Fe-4S] cluster-binding residues include C9, C23, C26, and C32. 63–70 (GKGGVGKS) serves as a coordination point for ATP. Residues C240 and C243 each coordinate [4Fe-4S] cluster.

Belongs to the Mrp/NBP35 ATP-binding proteins family. NUBP1/NBP35 subfamily. As to quaternary structure, heterotetramer of 2 Nubp1 and 2 Nubp2 chains. The cofactor is [4Fe-4S] cluster.

The protein resides in the cytoplasm. Its function is as follows. Component of the cytosolic iron-sulfur (Fe/S) protein assembly (CIA) machinery. Required for maturation of extramitochondrial Fe-S proteins. The Nubp1-Nubp2 heterotetramer forms a Fe-S scaffold complex, mediating the de novo assembly of an Fe-S cluster and its transfer to target apoproteins. The chain is Cytosolic Fe-S cluster assembly factor Nubp1 homolog from Drosophila yakuba (Fruit fly).